The sequence spans 599 residues: Sulfite reductase [NADPH] flavoprotein alpha-component (599 aa).

One can recognise a Flavodoxin-like domain in the interval 64–202 (ITLISASQTG…AAAEWRARVV (139 aa)). Residues 70–75 (SQTGNA), 117–120 (STQG), and 153–162 (LGDTSYEFFC) each bind FMN. An FAD-binding FR-type domain is found at 234–448 (EAPLTATLSV…IEHNDNFRLP (215 aa)). FAD is bound by residues Thr-322, Ala-356, 386-389 (RLYS), 404-406 (TVG), Tyr-410, and 419-422 (GGAS). NADP(+) contacts are provided by residues 519-520 (SR), 525-529 (KIYVQ), and Asp-561. Tyr-599 lines the FAD pocket.

Belongs to the NADPH-dependent sulphite reductase flavoprotein subunit CysJ family. It in the N-terminal section; belongs to the flavodoxin family. This sequence in the C-terminal section; belongs to the flavoprotein pyridine nucleotide cytochrome reductase family. In terms of assembly, alpha(8)-beta(8). The alpha component is a flavoprotein, the beta component is a hemoprotein. FAD serves as cofactor. The cofactor is FMN.

The enzyme catalyses hydrogen sulfide + 3 NADP(+) + 3 H2O = sulfite + 3 NADPH + 4 H(+). Its pathway is sulfur metabolism; hydrogen sulfide biosynthesis; hydrogen sulfide from sulfite (NADPH route): step 1/1. Functionally, component of the sulfite reductase complex that catalyzes the 6-electron reduction of sulfite to sulfide. This is one of several activities required for the biosynthesis of L-cysteine from sulfate. The flavoprotein component catalyzes the electron flow from NADPH -&gt; FAD -&gt; FMN to the hemoprotein component. The polypeptide is Sulfite reductase [NADPH] flavoprotein alpha-component (Klebsiella pneumoniae subsp. pneumoniae (strain ATCC 700721 / MGH 78578)).